Consider the following 316-residue polypeptide: Phosphate acetyltransferase (316 aa).

The protein belongs to the phosphate acetyltransferase and butyryltransferase family.

The protein localises to the cytoplasm. It catalyses the reaction acetyl-CoA + phosphate = acetyl phosphate + CoA. It participates in metabolic intermediate biosynthesis; acetyl-CoA biosynthesis; acetyl-CoA from acetate: step 2/2. In Rhizobium meliloti (Ensifer meliloti), this protein is Phosphate acetyltransferase (pta).